The primary structure comprises 509 residues: Cobyric acid synthase (509 aa).

The GATase cobBQ-type domain occupies 262-459 (EIKVGIIKLP…IHGIFENDSW (198 aa)). Cys343 (nucleophile) is an active-site residue. Residue His451 is part of the active site.

The protein belongs to the CobB/CobQ family. CobQ subfamily.

It functions in the pathway cofactor biosynthesis; adenosylcobalamin biosynthesis. In terms of biological role, catalyzes amidations at positions B, D, E, and G on adenosylcobyrinic A,C-diamide. NH(2) groups are provided by glutamine, and one molecule of ATP is hydrogenolyzed for each amidation. This Prochlorococcus marinus (strain MIT 9215) protein is Cobyric acid synthase.